The chain runs to 740 residues: Ion-translocating oxidoreductase complex subunit C (740 aa).

4Fe-4S ferredoxin-type domains are found at residues 369 to 397 (GEPQEEQSCIRCSACADACPADLLPQQLY) and 407 to 436 (KATTHNIADCIECGACAWVCPSNIPLVQYF). Cysteine 377, cysteine 380, cysteine 383, cysteine 387, cysteine 416, cysteine 419, cysteine 422, and cysteine 426 together coordinate [4Fe-4S] cluster. Disordered stretches follow at residues 602 to 652 (KLEQ…DPRK), 664 to 685 (ARKLEQQQANAEPEEQVDPRKA), and 695 to 714 (KARKLEQQQANAEPEEQVDP). The span at 605-615 (QQQANAEPEQQ) shows a compositional bias: low complexity.

This sequence belongs to the 4Fe4S bacterial-type ferredoxin family. RnfC subfamily. The complex is composed of six subunits: RsxA, RsxB, RsxC, RsxD, RsxE and RsxG. It depends on [4Fe-4S] cluster as a cofactor.

The protein localises to the cell inner membrane. In terms of biological role, part of a membrane-bound complex that couples electron transfer with translocation of ions across the membrane. Required to maintain the reduced state of SoxR. This Escherichia coli O157:H7 protein is Ion-translocating oxidoreductase complex subunit C.